We begin with the raw amino-acid sequence, 739 residues long: Polyribonucleotide nucleotidyltransferase (739 aa).

Residues D514 and D520 each coordinate Mg(2+). The KH domain maps to P580–I639. The S1 motif domain maps to G651–V723.

The protein belongs to the polyribonucleotide nucleotidyltransferase family. The cofactor is Mg(2+).

The protein localises to the cytoplasm. The catalysed reaction is RNA(n+1) + phosphate = RNA(n) + a ribonucleoside 5'-diphosphate. Its function is as follows. Involved in mRNA degradation. Catalyzes the phosphorolysis of single-stranded polyribonucleotides processively in the 3'- to 5'-direction. The polypeptide is Polyribonucleotide nucleotidyltransferase (Streptomyces coelicolor (strain ATCC BAA-471 / A3(2) / M145)).